The primary structure comprises 552 residues: MRKNGFVVMGHLLKLVTPLAHIMAFTITMGTLGFLAAIFIMVLGATGLVNLLNFDTHLSFSGILTALIVLAVARGALRYLEQMSGHYIAFKLLALLRDKVFSSLRRLAFVKLQDKQAGQLVSLVTNDIELLEVFYAHTIAPIMIAFFTSAILLLVFAQLSSWFVLVALAAYLTVGVILPIITTKLAREDGRRYRELVGEMNDFFLDSVRGMKEIQLFGYAKQRLDEIQQRSQKIDTAFERIKDQEAKVRVYTEVAVSVFNIIMLFTGLILFSLDKIDFAAFLIGVILLMSSYGPVIALSNLSSNLLQTLASGERVLSLLAEEPELKDVESAVDLKDVSRIDVENVNFAYGEEQILSDVSLSVKKGEILGIHGRSGSGKSTLLKLLMRFYDPKSGSIKINGETLPNINTCSLRDNMAYITQQTYIFNETIEENIRLARRDATLEEIMEAAKKASIHDFILSLPQGYQTKMTELGGNLSDGEKQRIGIARAFLHNAPIILLDEPTSNLDSLNEAMILKSLLNVKAEKLIILVSHRQSTMAICDQVIGIENGRMS.

6 consecutive transmembrane segments (helical) span residues 22–42 (IMAF…FIMV), 52–72 (LNFD…VLAV), 139–159 (IAPI…FAQL), 162–182 (WFVL…PIIT), 253–273 (EVAV…LFSL), and 278–298 (FAAF…VIAL). The region spanning 23-307 (MAFTITMGTL…LSNLSSNLLQ (285 aa)) is the ABC transmembrane type-1 domain. An ABC transporter domain is found at 340–552 (IDVENVNFAY…VIGIENGRMS (213 aa)). 372-379 (GRSGSGKS) is an ATP binding site.

It belongs to the ABC transporter superfamily. Lipid exporter (TC 3.A.1.106) family.

It is found in the cell inner membrane. This chain is Probable ABC transporter ATP-binding/permease protein HI_0664, found in Haemophilus influenzae (strain ATCC 51907 / DSM 11121 / KW20 / Rd).